The chain runs to 200 residues: Cysteine-rich venom protein VAR8 (200 aa).

An N-terminal signal peptide occupies residues 1 to 22; it reads MILLKLYLTLAAILCQSRGTTS. Residues 41-169 enclose the SCP domain; that stretch reads NKHNDLRRTV…PLKYFLVCQY (129 aa). Disulfide bonds link cysteine 77-cysteine 156, cysteine 95-cysteine 170, cysteine 151-cysteine 167, and cysteine 189-cysteine 196.

The protein belongs to the CRISP family. Contains 8 disulfide bonds. In terms of tissue distribution, expressed by the venom gland.

The protein localises to the secreted. Functionally, blocks ryanodine receptors, and potassium channels. The protein is Cysteine-rich venom protein VAR8 of Varanus acanthurus (Ridge-tailed monitor).